A 443-amino-acid polypeptide reads, in one-letter code: ATP-dependent protease ATPase subunit HslU (443 aa).

ATP-binding positions include isoleucine 18, 60–65 (GVGKTE), aspartate 256, glutamate 321, and arginine 393.

Belongs to the ClpX chaperone family. HslU subfamily. A double ring-shaped homohexamer of HslV is capped on each side by a ring-shaped HslU homohexamer. The assembly of the HslU/HslV complex is dependent on binding of ATP.

It is found in the cytoplasm. Its function is as follows. ATPase subunit of a proteasome-like degradation complex; this subunit has chaperone activity. The binding of ATP and its subsequent hydrolysis by HslU are essential for unfolding of protein substrates subsequently hydrolyzed by HslV. HslU recognizes the N-terminal part of its protein substrates and unfolds these before they are guided to HslV for hydrolysis. In Nitrosospira multiformis (strain ATCC 25196 / NCIMB 11849 / C 71), this protein is ATP-dependent protease ATPase subunit HslU.